Consider the following 133-residue polypeptide: Large ribosomal subunit protein bL20 (133 aa).

This sequence belongs to the bacterial ribosomal protein bL20 family.

Its function is as follows. Binds directly to 23S ribosomal RNA and is necessary for the in vitro assembly process of the 50S ribosomal subunit. It is not involved in the protein synthesizing functions of that subunit. This chain is Large ribosomal subunit protein bL20, found in Bartonella quintana (strain Toulouse) (Rochalimaea quintana).